Here is a 179-residue protein sequence, read N- to C-terminus: Large ribosomal subunit protein uL5 (179 aa).

This sequence belongs to the universal ribosomal protein uL5 family. In terms of assembly, part of the 50S ribosomal subunit; part of the 5S rRNA/L5/L18/L25 subcomplex. Contacts the 5S rRNA and the P site tRNA. Forms a bridge to the 30S subunit in the 70S ribosome.

In terms of biological role, this is one of the proteins that bind and probably mediate the attachment of the 5S RNA into the large ribosomal subunit, where it forms part of the central protuberance. In the 70S ribosome it contacts protein S13 of the 30S subunit (bridge B1b), connecting the 2 subunits; this bridge is implicated in subunit movement. Contacts the P site tRNA; the 5S rRNA and some of its associated proteins might help stabilize positioning of ribosome-bound tRNAs. The protein is Large ribosomal subunit protein uL5 of Klebsiella pneumoniae (strain 342).